Here is a 485-residue protein sequence, read N- to C-terminus: MKFIVKLFPEIMIKSETVRKRFAKILTSNIRNILQKYDEETAVVRHWDYIEVRSKNEENREELIALLQRIPGIHHFLEVEEKPFTDLHHIFELTLADVAQQLQGKTFCVRVKRKGKHKFSSIEAERYIGGGLNQHIESTKVRLKNPDVTVRIDIEDDKMMLVKARHAGIGGYPIGTQEDVLSLISGGFDSGVSSYMLIRRGSRVHYCFFNLGGAAHEIGVKQMAYHIWQRYSASHKVRFIAINFEGVVGEILEKVDNGQMGVVLKRMMVRAASKVAQRFNIEAIVTGEALGQVSSQTLTNLRLIDEAADALVLRPLITHDKEQIIAMAKEIGTDDIAKSMPEFCGVISKNPTIKAVREKILAEEGNFNFEILESAVQNAKYLDIRQIAEETEKEVVEVEAISVLGENEVILDIRSPEETDEKPFESGAHDVIQMPFYKLSSQFGSLDQSKNYVLYCERGVMSKLQALYLKENGFSNVRVFAKNIH.

In terms of domain architecture, THUMP spans 61 to 165; that stretch reads EELIALLQRI…DDKMMLVKAR (105 aa). ATP-binding positions include 183–184, lysine 265, glycine 287, and glutamine 296; that span reads LI. The cysteines at positions 344 and 456 are disulfide-linked. The Rhodanese domain maps to 404–483; that stretch reads LGENEVILDI…FSNVRVFAKN (80 aa). The active-site Cysteine persulfide intermediate is the cysteine 456.

The protein belongs to the ThiI family.

The protein resides in the cytoplasm. It catalyses the reaction [ThiI sulfur-carrier protein]-S-sulfanyl-L-cysteine + a uridine in tRNA + 2 reduced [2Fe-2S]-[ferredoxin] + ATP + H(+) = [ThiI sulfur-carrier protein]-L-cysteine + a 4-thiouridine in tRNA + 2 oxidized [2Fe-2S]-[ferredoxin] + AMP + diphosphate. The catalysed reaction is [ThiS sulfur-carrier protein]-C-terminal Gly-Gly-AMP + S-sulfanyl-L-cysteinyl-[cysteine desulfurase] + AH2 = [ThiS sulfur-carrier protein]-C-terminal-Gly-aminoethanethioate + L-cysteinyl-[cysteine desulfurase] + A + AMP + 2 H(+). It participates in cofactor biosynthesis; thiamine diphosphate biosynthesis. In terms of biological role, catalyzes the ATP-dependent transfer of a sulfur to tRNA to produce 4-thiouridine in position 8 of tRNAs, which functions as a near-UV photosensor. Also catalyzes the transfer of sulfur to the sulfur carrier protein ThiS, forming ThiS-thiocarboxylate. This is a step in the synthesis of thiazole, in the thiamine biosynthesis pathway. The sulfur is donated as persulfide by IscS. The sequence is that of tRNA sulfurtransferase from Haemophilus influenzae (strain PittGG).